The sequence spans 368 residues: Cobalt-precorrin-5B C(1)-methyltransferase (368 aa).

This sequence belongs to the CbiD family.

It catalyses the reaction Co-precorrin-5B + S-adenosyl-L-methionine = Co-precorrin-6A + S-adenosyl-L-homocysteine. Its pathway is cofactor biosynthesis; adenosylcobalamin biosynthesis; cob(II)yrinate a,c-diamide from sirohydrochlorin (anaerobic route): step 6/10. Functionally, catalyzes the methylation of C-1 in cobalt-precorrin-5B to form cobalt-precorrin-6A. The chain is Cobalt-precorrin-5B C(1)-methyltransferase from Brucella ovis (strain ATCC 25840 / 63/290 / NCTC 10512).